We begin with the raw amino-acid sequence, 498 residues long: Putative BTB/POZ domain-containing protein L788 (498 aa).

A BTB domain is found at threonine 28 to asparagine 99.

This sequence belongs to the mimivirus BTB/WD family.

The chain is Putative BTB/POZ domain-containing protein L788 from Acanthamoeba polyphaga (Amoeba).